We begin with the raw amino-acid sequence, 546 residues long: Probable protein kinase UbiB (546 aa).

The 379-residue stretch at 124 to 502 (DFEIKPLASA…HVRQGQSRYF (379 aa)) folds into the Protein kinase domain. ATP is bound by residues 130–138 (LASASIAQV) and Lys153. The Proton acceptor role is filled by Asp288. 2 helical membrane-spanning segments follow: residues 501–521 (YFLGIGATLVLSGTFLLVSRP) and 522–542 (EWGLMPGWLMAGGLIAWFVGW).

The protein belongs to the ABC1 family. UbiB subfamily.

It is found in the cell inner membrane. It functions in the pathway cofactor biosynthesis; ubiquinone biosynthesis [regulation]. In terms of biological role, is probably a protein kinase regulator of UbiI activity which is involved in aerobic coenzyme Q (ubiquinone) biosynthesis. The chain is Probable protein kinase UbiB from Shigella sonnei (strain Ss046).